A 466-amino-acid chain; its full sequence is Uronate isomerase (466 aa).

The protein belongs to the metallo-dependent hydrolases superfamily. Uronate isomerase family.

It catalyses the reaction D-glucuronate = D-fructuronate. The catalysed reaction is aldehydo-D-galacturonate = keto-D-tagaturonate. The protein operates within carbohydrate metabolism; pentose and glucuronate interconversion. The polypeptide is Uronate isomerase (Caldanaerobacter subterraneus subsp. tengcongensis (strain DSM 15242 / JCM 11007 / NBRC 100824 / MB4) (Thermoanaerobacter tengcongensis)).